The chain runs to 163 residues: Neurotrophin-3 (163 aa).

An N-terminal signal peptide occupies residues 1–3 (IQS). Positions 4–119 (TSMDQGILTE…VLNRTSRRKR (116 aa)) are excised as a propeptide. Asn112 is a glycosylation site (N-linked (GlcNAc...) asparagine).

Belongs to the NGF-beta family.

The protein localises to the secreted. Its function is as follows. Seems to promote the survival of visceral and proprioceptive sensory neurons. The sequence is that of Neurotrophin-3 (NTF3) from Eryx colubrinus colubrinus.